A 194-amino-acid polypeptide reads, in one-letter code: Small ribosomal subunit protein eS7 (194 aa).

The protein belongs to the eukaryotic ribosomal protein eS7 family.

The chain is Small ribosomal subunit protein eS7 (rps-7) from Caenorhabditis elegans.